Here is a 340-residue protein sequence, read N- to C-terminus: Putative RRN3-like protein RRN3P2 (340 aa).

Belongs to the RRN3 family.

In Homo sapiens (Human), this protein is Putative RRN3-like protein RRN3P2 (RRN3P2).